The sequence spans 203 residues: MSAIAPGMILFAYLCGSISSAILVCRIAGLPDPRESGSGNPGATNVLRIGGKGAAVAVLIFDILKGMLPVWGAYALGVTPFWLGLIAIAACLGHIWPVFFGFKGGKGVATAFGAIAPIGWDLTGVMAGTWLLTVLLSGYSSLGAIVSALIAPFYVWWFKPQFTFPVSMLSCLILLRHHDNIQRLWRRQETKIWTKLKKKRQKD.

Topologically, residues 1–3 are periplasmic; that stretch reads MSA. A helical transmembrane segment spans residues 4–24; that stretch reads IAPGMILFAYLCGSISSAILV. Residues 25–52 are Cytoplasmic-facing; sequence CRIAGLPDPRESGSGNPGATNVLRIGGK. The chain crosses the membrane as a helical span at residues 53–73; it reads GAAVAVLIFDILKGMLPVWGA. The Periplasmic portion of the chain corresponds to 74 to 80; that stretch reads YALGVTP. A helical membrane pass occupies residues 81-101; that stretch reads FWLGLIAIAACLGHIWPVFFG. Over 102-111 the chain is Cytoplasmic; the sequence is FKGGKGVATA. A helical membrane pass occupies residues 112–132; that stretch reads FGAIAPIGWDLTGVMAGTWLL. The Periplasmic segment spans residues 133–137; sequence TVLLS. The helical transmembrane segment at 138–158 threads the bilayer; the sequence is GYSSLGAIVSALIAPFYVWWF. Residues 159–203 are Cytoplasmic-facing; sequence KPQFTFPVSMLSCLILLRHHDNIQRLWRRQETKIWTKLKKKRQKD.

The protein belongs to the PlsY family. As to quaternary structure, probably interacts with PlsX.

It localises to the cell inner membrane. It catalyses the reaction sn-glycerol 3-phosphate + an acyl-CoA = a 1-acyl-sn-glycero-3-phosphate + CoA. The catalysed reaction is a fatty acyl-[ACP] + sn-glycerol 3-phosphate = a 1-acyl-sn-glycero-3-phosphate + holo-[ACP]. It participates in lipid metabolism; phospholipid metabolism. Catalyzes the transfer of an acyl group from acyl-ACP to glycerol-3-phosphate (G3P) to form lysophosphatidic acid (LPA). This enzyme can also utilize acyl-CoA as fatty acyl donor, but not acyl-PO(4). The sequence is that of Glycerol-3-phosphate acyltransferase from Salmonella agona (strain SL483).